The primary structure comprises 589 residues: RNA-directed RNA polymerase subunit beta (589 aa).

In terms of domain architecture, RdRp catalytic spans 259–391; that stretch reads RRAHEGSVTN…TNTKKTFSEG (133 aa). The Mg(2+) site is built by D274, D359, and D360.

As to quaternary structure, homodimer; the replicase complex can dimerize. Part of the viral RNA-dependent RNA polymerase complex, the other subunits are the host ribosomal protein S1, EF-Tu and EF-Ts. S1 is needed for the initiation of genomic RNA (+)-strand replication. Requires Mg(2+) as cofactor.

The enzyme catalyses RNA(n) + a ribonucleoside 5'-triphosphate = RNA(n+1) + diphosphate. In terms of biological role, this is the catalytic subunit of the viral RNA-dependent RNA polymerase complex. This complex is involved in viral RNA replication that produces (+)-stranded genomes via a complementary, (-)-stranded intermediate. Binds RNA cooperatively with the host ribosomal protein S1. This Escherichia coli (Bacteriophage Q-beta) protein is RNA-directed RNA polymerase subunit beta.